A 789-amino-acid chain; its full sequence is Leucine-rich repeat and fibronectin type-III domain-containing protein 2 (789 aa).

An N-terminal signal peptide occupies residues 1-20 (METLLGGLLAFGMAFAVVDA). Positions 21 to 52 (CPKYCVCQNLSESLGTLCPSKGLLFVPPDIDR) constitute an LRRNT domain. At 21–534 (CPKYCVCQNL…MHSQILGGTM (514 aa)) the chain is on the extracellular side. N-linked (GlcNAc...) asparagine glycosylation occurs at N29. 7 LRR repeats span residues 53-74 (RTVELRLGGNFIIHISRQDFAN), 77-98 (GLVDLTLSRNTISHIQPFSFLD), 101-122 (SLRSLHLDSNRLPSLGEDTLRG), 125-146 (NLQHLIVNNNQLGGIADEAFED), 150-171 (TLEDLDLSYNNLHGLPWDSVRR), 174-195 (NLHQLSLDHNLLDHIAEGTFAD), and 198-219 (KLARLDLTSNRLQKLPPDPIFA). Residues 242–288 (NPLHCNCELLWLRRLERDDDLETCGSPGGLKGRYFWHVREEEFVCEP) form the LRRCT domain. One can recognise an Ig-like domain in the interval 289 to 375 (PLITQHTHKL…GEATAMVEVS (87 aa)). Cysteines 310 and 359 form a disulfide. N-linked (GlcNAc...) asparagine glycosylation is found at N332, N341, and N384. The interval 383–424 (SNSTSRTAPPKSRLSDITGSSKTSRGGGGSGGGEPPKSPPER) is disordered. Gly residues predominate over residues 407-416 (RGGGGSGGGE). Residues 421 to 518 (PPERAVLVSE…GCAQFFTKAD (98 aa)) form the Fibronectin type-III domain. Residues 535–555 (ILVIGGIIVATLLVFIVILMV) traverse the membrane as a helical segment. The Cytoplasmic segment spans residues 556 to 789 (RYKVCNHEAP…SSEWVMESTV (234 aa)). 3 disordered regions span residues 577-602 (SQTNGAQPPPPSSAPAGAPPQGPPKV), 619-654 (SDSSSSSSLGSGEAAGLGRAPWRIPPSAPRPKPSLD), and 668-702 (QRKEELLDSRTPAGRGAGTSARGHHSDREPLLGPP). Over residues 583 to 599 (QPPPPSSAPAGAPPQGP) the composition is skewed to pro residues. A compositionally biased stretch (low complexity) spans 619 to 638 (SDSSSSSSLGSGEAAGLGRA). Over residues 641–650 (RIPPSAPRPK) the composition is skewed to pro residues. The PDZ-binding signature appears at 786 to 789 (ESTV).

The protein belongs to the LRFN family. As to quaternary structure, forms heteromeric complexes with LRFN1, LRFN3, LRFN4 and LRFN5. Can form homomeric complexes, but not across cell junctions. Directly interacts with 2 NMDA receptor subunits GRIN1 and GRIN2A. Interacts with DLG1, DLG2, DLG3 and DLG4. Post-translationally, glycosylated.

The protein localises to the membrane. It localises to the synapse. It is found in the postsynaptic cell membrane. Functionally, promotes neurite outgrowth in hippocampal neurons. Enhances the cell surface expression of 2 NMDA receptor subunits GRIN1 and GRIN2A. May play a role in redistributing DLG4 to the cell periphery. The chain is Leucine-rich repeat and fibronectin type-III domain-containing protein 2 (LRFN2) from Homo sapiens (Human).